Reading from the N-terminus, the 130-residue chain is MKVLNNLLYTGDHEWVRVEDNKAYIGISDCAQRMLSDIVFVELPEVDDEIAKGETFATIESVKAASDSYMPVSGTIVEINEELEDNPAALNEDPYGSWIAAIEMSDKSELEELIKPEVYEKICEELDKEA.

The region spanning 22–103 (KAYIGISDCA…PYGSWIAAIE (82 aa)) is the Lipoyl-binding domain. N6-lipoyllysine is present on Lys-63.

It belongs to the GcvH family. In terms of assembly, the glycine cleavage system is composed of four proteins: P, T, L and H. The cofactor is (R)-lipoate.

Its function is as follows. The glycine cleavage system catalyzes the degradation of glycine. The H protein shuttles the methylamine group of glycine from the P protein to the T protein. In Clostridium botulinum (strain ATCC 19397 / Type A), this protein is Glycine cleavage system H protein.